Reading from the N-terminus, the 673-residue chain is DNA ligase (673 aa).

NAD(+) is bound by residues 33-37 (DYEYD), 82-83 (SL), and glutamate 113. The active-site N6-AMP-lysine intermediate is the lysine 115. NAD(+) is bound by residues arginine 136, glutamate 170, lysine 285, and lysine 309. Residues cysteine 403, cysteine 406, cysteine 421, and cysteine 426 each coordinate Zn(2+). A BRCT domain is found at 583 to 672 (AKSDILKGYT…SHEEVEKILM (90 aa)).

The protein belongs to the NAD-dependent DNA ligase family. LigA subfamily. Requires Mg(2+) as cofactor. Mn(2+) is required as a cofactor.

It carries out the reaction NAD(+) + (deoxyribonucleotide)n-3'-hydroxyl + 5'-phospho-(deoxyribonucleotide)m = (deoxyribonucleotide)n+m + AMP + beta-nicotinamide D-nucleotide.. Functionally, DNA ligase that catalyzes the formation of phosphodiester linkages between 5'-phosphoryl and 3'-hydroxyl groups in double-stranded DNA using NAD as a coenzyme and as the energy source for the reaction. It is essential for DNA replication and repair of damaged DNA. This is DNA ligase from Caldicellulosiruptor saccharolyticus (strain ATCC 43494 / DSM 8903 / Tp8T 6331).